A 207-amino-acid chain; its full sequence is Glutathione S-transferase P (207 aa).

Positions P1 to G78 constitute a GST N-terminal domain. Y3 is modified (phosphotyrosine; by EGFR). Glutathione-binding positions include Y7, R13, W38, K42, and Q49–L50. Position 59 is a phosphothreonine (T59). Q62–S63 provides a ligand contact to glutathione. Positions D80–I201 constitute a GST C-terminal domain. 2 positions are modified to N6-succinyllysine: K100 and K113. Residue K125 is modified to N6-acetyllysine.

It belongs to the GST superfamily. Pi family. Homodimer. Interacts with CDK5.

It localises to the cytoplasm. The protein localises to the mitochondrion. The protein resides in the nucleus. It carries out the reaction RX + glutathione = an S-substituted glutathione + a halide anion + H(+). The enzyme catalyses prostaglandin J2 + glutathione = prostaglandin J2-S-(R)-glutathione. It catalyses the reaction prostaglandin J2 + glutathione = prostaglandin J2-S-(S)-glutathione. The catalysed reaction is prostaglandin A2 + glutathione = prostaglandin A2-S-(S)-glutathione. It carries out the reaction 11(S)-hydroxy-14(S),15(S)-epoxy-(5Z,8Z,12E)-eicosatrienoate + glutathione = (11S,15S)-dihydroxy-14(R)-S-glutathionyl-(5Z,8Z,12E)-eicosatrienoate. Functionally, conjugation of reduced glutathione to a wide number of exogenous and endogenous hydrophobic electrophiles. Involved in the formation of glutathione conjugates of both prostaglandin A2 (PGA2) and prostaglandin J2 (PGJ2). Participates in the formation of novel hepoxilin regioisomers. Negatively regulates CDK5 activity via p25/p35 translocation to prevent neurodegeneration. In Sus scrofa (Pig), this protein is Glutathione S-transferase P (GSTP1).